A 116-amino-acid chain; its full sequence is Classical arabinogalactan protein 25 (116 aa).

Positions 1–28 are cleaved as a signal peptide; it reads MAFSFLNKLLIIFIFIFISLSSSSPTIS. Residues 40-95 form a disordered region; sequence LLPSPGDALPSDDGSGTIPSSPSPPDPDTNDGSYPDPLAFSPFASPPVSSPSPPPS. 2 stretches are compositionally biased toward low complexity: residues 50 to 59 and 69 to 82; these read SDDGSGTIPS and NDGS…FSPF. Positions 83-95 are enriched in pro residues; the sequence is ASPPVSSPSPPPS. Residue serine 89 is the site of GPI-anchor amidated serine attachment. Positions 90 to 116 are cleaved as a propeptide — removed in mature form; the sequence is PSPPPSLPSAGVLLISLIISSASFLAL.

The protein belongs to the classical AGP family. O-glycosylated on the hydroxyproline residues.

The protein localises to the cell membrane. Proteoglycan that seems to be implicated in diverse developmental roles such as differentiation, cell-cell recognition, embryogenesis and programmed cell death. The polypeptide is Classical arabinogalactan protein 25 (AGP25) (Arabidopsis thaliana (Mouse-ear cress)).